A 4700-amino-acid chain; its full sequence is StAR-related lipid transfer protein 9 (4700 aa).

In terms of domain architecture, Kinesin motor spans 3–384 (NVQVAVRVRP…LRYASSAKNI (382 aa)). ATP is bound at residue 103-110 (GQTGSGKT). Residues 310 to 328 (GDSGILSSPSGTSSGGAPS) are compositionally biased toward low complexity. Residues 310 to 331 (GDSGILSSPSGTSSGGAPSRRQ) form a disordered region. One can recognise an FHA domain in the interval 498 to 569 (LKEGTTKIGR…LTQGAVITLG (72 aa)). Composition is skewed to basic and acidic residues over residues 631–646 (QCDEDHQTPRDGETSH) and 867–877 (TSEKTSSEEHL). Disordered stretches follow at residues 631–652 (QCDEDHQTPRDGETSHRAQIQQ), 851–880 (WDPSTTLPPRPDPTHQTSEKTSSEEHLPQA), 1057–1104 (KKSS…SDTD), and 1128–1188 (ERKW…GFTA). Over residues 1134–1146 (PEPENSESDDSQL) the composition is skewed to acidic residues. Phosphoserine is present on S1203. Disordered stretches follow at residues 1939-1976 (MPGESAVSLKSRSVDRRVSSPVMVAQGGGPTPKWEGKN), 2014-2043 (ERNPSECKSQEMLNPNREPSGKKQNKRVNN), 2088-2179 (DQKE…PARD), 2254-2290 (ESQVAEHVSSSNQEEPKAQGKVEEMPMQRGGSLQEEN), 2377-2403 (GVEHQDQSTETRSHSPEGNVRGRSSEA), 2416-2444 (MGSHSQSGVPESIPLGTEDRISASTSPQD), 2479-2539 (LNKV…PRLL), 2589-2613 (RVAGRPQCKQIDQSSSDQTRNEGEA), 2642-2678 (LSADSFESLPNTETDREPWDPVQAFSHAAPAQDRKRR), 2696-2731 (SSSSEIIEKKKDATRTPSSADPLAPDSPRSSAPVEE), 2765-2789 (PQETAEGIPPGSQDSSPEHQEPRTL), 2821-2852 (VQNSTSASGPKQDHVQCPEASTGFEEGRASPK), 2892-2955 (SKHS…PCRQ), 3124-3144 (NAQVCQTNPEPPATTQGPHTL), 3199-3241 (HTCS…GLDG), 3274-3412 (SLRQ…MPST), 3564-3611 (IALG…KGSA), 3766-3790 (SDTSTVSQEEGDVPGVPQKREAEET), 3830-3884 (LPSV…RVQK), 3906-3991 (ASTQ…SPKL), 4033-4086 (PEKV…QHLS), and 4153-4193 (PGGL…EWSK). A compositionally biased stretch (basic and acidic residues) spans 2088 to 2100 (DQKEQEKTDHAFR). Positions 2103–2118 (SSGNPLPSKDQPSSPR) are enriched in polar residues. A compositionally biased stretch (basic and acidic residues) spans 2119–2129 (QTDDTVFRDSE). Over residues 2137-2148 (SIGNHPQVQKIT) the composition is skewed to polar residues. Residues 2153–2169 (RSREGVRESEPVREHTH) show a composition bias toward basic and acidic residues. The segment covering 2254–2266 (ESQVAEHVSSSNQ) has biased composition (polar residues). 2 stretches are compositionally biased toward basic and acidic residues: residues 2267 to 2279 (EEPKAQGKVEEMP) and 2379 to 2391 (EHQDQSTETRSHS). Positions 2500 to 2510 (QASKPRQKAEK) are enriched in basic and acidic residues. Polar residues predominate over residues 2642-2653 (LSADSFESLPNT). Residues 2712-2729 (PSSADPLAPDSPRSSAPV) show a composition bias toward low complexity. Over residues 2916–2925 (APCRHPREAL) the composition is skewed to basic and acidic residues. The segment covering 3124 to 3141 (NAQVCQTNPEPPATTQGP) has biased composition (polar residues). Polar residues-rich tracts occupy residues 3274 to 3285 (SLRQNETPQPAA), 3320 to 3339 (SSPTPQFSVVGSSRSLQELN), and 3368 to 3387 (SGKSVARTSLQAEDSNQKAS). Positions 3388–3397 (SRLDDGTTDH) are enriched in basic and acidic residues. Residues 3857-3872 (SSPSPSSPHSPGLFPS) are compositionally biased toward low complexity. Polar residues predominate over residues 3906–3924 (ASTQEPGLSPGSLTLSAPS). A compositionally biased stretch (low complexity) spans 3958–3975 (LGGSQRGRSSLQRSNGRS). Residues 4048 to 4065 (EPSQWQSRTENGGESSAS) are compositionally biased toward polar residues. Positions 4334–4387 (SDIELMLQDYQQAHEEAKVEIARARDQLRERTEQEKLRIHQKIISQLLKEEDKL) form a coiled coil. The span at 4397-4411 (CTSSNGSLSSGMTSG) shows a compositional bias: low complexity. The interval 4397–4419 (CTSSNGSLSSGMTSGYNSSPALS) is disordered. The START domain maps to 4483-4700 (SYQDLAKHVV…IARLASFLGR (218 aa)).

It belongs to the TRAFAC class myosin-kinesin ATPase superfamily. Kinesin family. In terms of assembly, interacts with ATAD3A. In terms of tissue distribution, expressed in the central nervous system, muscle cells (heart and skeletal muscle), pancreas, prostate and lung.

The protein localises to the cytoplasm. The protein resides in the cytoskeleton. Its subcellular location is the microtubule organizing center. It localises to the centrosome. It is found in the centriole. The protein localises to the nucleus. Its function is as follows. Microtubule-dependent motor protein required for spindle pole assembly during mitosis. Required to stabilize the pericentriolar material (PCM). This chain is StAR-related lipid transfer protein 9 (STARD9), found in Homo sapiens (Human).